The primary structure comprises 403 residues: G-protein coupled receptor family C group 5 member B (403 aa).

The N-terminal stretch at 1–28 (MFVASERKMRAHQVLTFLLLFVITSVAS) is a signal peptide. The Extracellular portion of the chain corresponds to 29–56 (ENASTSRGCGLDLLPQYVSLCDLDAIWG). Residue Asn30 is glycosylated (N-linked (GlcNAc...) asparagine). The chain crosses the membrane as a helical span at residues 57–77 (IVVEAVAGAGALITLLLMLIL). Over 78–94 (LVRLPFIKEKEKKSPVG) the chain is Cytoplasmic. Residues 95 to 115 (LHFLFLLGTLGLFGLTFAFII) form a helical membrane-spanning segment. Residues 116 to 126 (QEDETICSVRR) lie on the Extracellular side of the membrane. Residues 127-147 (FLWGVLFALCFSCLLSQAWRV) traverse the membrane as a helical segment. The Cytoplasmic segment spans residues 148 to 162 (RRLVRHGTGPAGWQL). A helical transmembrane segment spans residues 163 to 183 (VGLALCLMLVQVIIAVEWLVL). Topologically, residues 184-199 (TVLRDTRPACAYEPMD) are extracellular. The helical transmembrane segment at 200–220 (FVMALIYDMVLLVVTLGLALF) threads the bilayer. The Cytoplasmic portion of the chain corresponds to 221–234 (TLCGKFKRWKLNGA). Residues 235–255 (FLLITAFLSVLIWVAWMTMYL) form a helical membrane-spanning segment. The Extracellular portion of the chain corresponds to 256 to 271 (FGNVKLQQGDAWNDPT). A helical transmembrane segment spans residues 272-292 (LAITLAASGWVFVIFHAIPEI). Residues 293–403 (HCTLLPALQE…PPSHTGRHLW (111 aa)) are Cytoplasmic-facing. A disordered region spans residues 349 to 371 (GFPNGSLGKRPSGSLGKRPSAPF). At Ser354 the chain carries Phosphoserine.

Belongs to the G-protein coupled receptor 3 family. In terms of tissue distribution, expression is high in kidney, pancreas, and testis, medium in brain, heart, prostate, small intestine, and spleen, low in liver, placenta, skeletal muscle, colon, ovary, and thymus, and not detectable in lung and peripheral leukocyte. According to PubMed:10945465, highly expressed in most brain areas examined, with the highest levels observed in corpus callosum, caudate nucleus, putamen, substantia nigra, thalamus, hippocampus, and spinal cord as well as in dorsal root ganglia (DRG). Expressed in glia limitans, ependymal cells, astrocyte cell bodies, the perivascular region in astrocyte endfeet, but not in neurons. In the periphery, expression levels are relatively low, compared to the CNS, with the strongest expression detected in pancreas, testis, uterus, and stomach.

The protein localises to the cell membrane. The protein resides in the cytoplasmic vesicle membrane. Its function is as follows. G-protein coupled receptor involved in the regulation of cell volume. The chain is G-protein coupled receptor family C group 5 member B (GPRC5B) from Homo sapiens (Human).